Consider the following 385-residue polypeptide: Cytochrome b (385 aa).

4 consecutive transmembrane segments (helical) span residues 32–52 (MGSL…FMAM), 76–98 (WLLR…MHMA), 113–133 (VWII…LGYC), and 179–199 (FFAL…MHFM). Residues His-82 and His-96 each contribute to the heme b site. Residues His-183 and His-197 each coordinate heme b. A ubiquinone is bound at residue His-202. A run of 4 helical transmembrane segments spans residues 225–245 (FIFK…LFVF), 289–309 (LLGV…PLTD), 321–341 (ISKL…VLGS), and 348–368 (FVQM…IFVP).

It belongs to the cytochrome b family. In terms of assembly, fungal cytochrome b-c1 complex contains 10 subunits; 3 respiratory subunits, 2 core proteins and 5 low-molecular weight proteins. Cytochrome b-c1 complex is a homodimer. Heme b serves as cofactor.

It is found in the mitochondrion inner membrane. Functionally, component of the ubiquinol-cytochrome c reductase complex (complex III or cytochrome b-c1 complex) that is part of the mitochondrial respiratory chain. The b-c1 complex mediates electron transfer from ubiquinol to cytochrome c. Contributes to the generation of a proton gradient across the mitochondrial membrane that is then used for ATP synthesis. The polypeptide is Cytochrome b (COB) (Monosporozyma servazzii (Yeast)).